We begin with the raw amino-acid sequence, 354 residues long: Inactive ADP-ribosyltransferase ARH2 (354 aa).

At S27 the chain carries Phosphoserine.

Belongs to the ADP-ribosylglycohydrolase family.

It localises to the cytoplasm. The protein localises to the myofibril. The protein resides in the sarcomere. Required for myofibril assembly and outgrowth of the cardiac chambers in the developing heart. Appears to be catalytically inactive, showing no activity against O-acetyl-ADP-ribose. This Homo sapiens (Human) protein is Inactive ADP-ribosyltransferase ARH2 (ADPRHL1).